We begin with the raw amino-acid sequence, 470 residues long: Mucin-like protein 3 (470 aa).

Positions 1 to 29 (MAQMTSGLYPMFGFFICLLFLPASWEAGA) are cleaved as a signal peptide. The Extracellular segment spans residues 30–401 (NTFQELQKTG…EGSNSFPAWA (372 aa)). Disordered regions lie at residues 57 to 234 (RALS…HTIP) and 248 to 318 (TKEA…KAPE). Positions 75–87 (STATQKPKRQCNT) are enriched in polar residues. N-linked (GlcNAc...) asparagine glycosylation is present at N122. Positions 132–152 (ARNERSADDHGSTNSEKRSDG) are enriched in basic and acidic residues. Positions 169–193 (TRTSGTPVSSTETSTKLRTTSQKPE) are enriched in polar residues. Basic and acidic residues predominate over residues 194 to 203 (TSSHDSDLIR). Polar residues predominate over residues 204 to 222 (KSTSLPVKSTEVSRTSYRT). Positions 260 to 273 (KYERETRSASERIS) are enriched in basic and acidic residues. Over residues 283-295 (HTPSAGETTTQVS) the composition is skewed to polar residues. Residue N325 is glycosylated (N-linked (GlcNAc...) asparagine). The chain crosses the membrane as a helical span at residues 402–422 (IVVVILMAVIILLIFLGLIFL). Over 423-470 (VSCASRARHQLTQNSEDAEPEDKGGRNSYPVYLMEQQNLNLNQISSPP) the chain is Cytoplasmic.

It is found in the cell membrane. Its subcellular location is the cytoplasm. May modulate NF-kappaB signaling and play a role in cell growth. The polypeptide is Mucin-like protein 3 (Rattus norvegicus (Rat)).